The sequence spans 349 residues: DNA-directed RNA polymerase subunit Rpo1N (349 aa).

Residues 306–349 are disordered; sequence EDEGEEFAGEQATNLSESADDRMDRDRPSSHGAAPIDVPEVGDD. Residues 324–334 show a composition bias toward basic and acidic residues; sequence ADDRMDRDRPS.

Belongs to the RNA polymerase beta' chain family. In terms of assembly, part of the RNA polymerase complex.

Its subcellular location is the cytoplasm. It catalyses the reaction RNA(n) + a ribonucleoside 5'-triphosphate = RNA(n+1) + diphosphate. Functionally, DNA-dependent RNA polymerase (RNAP) catalyzes the transcription of DNA into RNA using the four ribonucleoside triphosphates as substrates. Forms the clamp head domain. The polypeptide is DNA-directed RNA polymerase subunit Rpo1N (Halococcus morrhuae (Micrococcus morrhuae)).